The primary structure comprises 128 residues: L-ectoine synthase (128 aa).

It belongs to the ectoine synthase family.

It carries out the reaction (2S)-4-acetamido-2-aminobutanoate = L-ectoine + H2O. It functions in the pathway amine and polyamine biosynthesis; ectoine biosynthesis; L-ectoine from L-aspartate 4-semialdehyde: step 3/3. In terms of biological role, catalyzes the circularization of gamma-N-acetyl-alpha,gamma-diaminobutyric acid (ADABA) to ectoine (1,4,5,6-tetrahydro-2-methyl-4-pyrimidine carboxylic acid), which is an excellent osmoprotectant. The chain is L-ectoine synthase from Aliivibrio fischeri (strain MJ11) (Vibrio fischeri).